We begin with the raw amino-acid sequence, 577 residues long: E3 ubiquitin-protein ligase MSL2 (577 aa).

Residues 1 to 116 (MNPVNATALY…CEYITQTTLA (116 aa)) form a sufficient for interaction with MSL1 region. Residues cysteine 44, cysteine 47, cysteine 62, histidine 64, cysteine 67, cysteine 70, cysteine 81, and cysteine 84 each coordinate Zn(2+). The segment at 44–85 (CCVCGHLLQDPIAPTNSTCQHYVCKTCKGKKMMMKPSCSWCK) adopts an RING-type zinc-finger fold. A Glycyl lysine isopeptide (Lys-Gly) (interchain with G-Cter in SUMO2) cross-link involves residue lysine 375. Residues 405–428 (TKSMKKSHEHGSKKSHSKSKPGIL) form a disordered region. The segment covering 407–423 (SMKKSHEHGSKKSHSKS) has biased composition (basic residues). A Phosphoserine modification is found at serine 447. A CXC MSL2-type domain is found at 457–508 (QEKKGCKCGRATQNPSVLTCRGQRCPCYSNRKACLDCICRGCQNSYMANGEK). Residues cysteine 462, cysteine 464, cysteine 476, cysteine 481, cysteine 483, cysteine 490, cysteine 493, cysteine 495, and cysteine 498 each coordinate Zn(2+).

Belongs to the MSL2 family. Component of a multisubunit histone acetyltransferase complex (MSL) at least composed of the KAT8/MOF/MYST1, MSL1/hampin, MSL2 and MSL3. Forms a MSL heterotetrameric core with MSL1.

It localises to the nucleus. Its subcellular location is the chromosome. The enzyme catalyses S-ubiquitinyl-[E2 ubiquitin-conjugating enzyme]-L-cysteine + [acceptor protein]-L-lysine = [E2 ubiquitin-conjugating enzyme]-L-cysteine + N(6)-ubiquitinyl-[acceptor protein]-L-lysine.. It participates in protein modification; protein ubiquitination. Functionally, non-catalytic component of the MSL histone acetyltransferase complex, a multiprotein complex that mediates the majority of histone H4 acetylation at 'Lys-16' (H4K16ac), an epigenetic mark that prevents chromatin compaction. The MSL complex is required for chromosome stability and genome integrity by maintaining homeostatic levels of H4K16ac. The MSL complex is also involved in gene dosage by promoting up-regulation of genes expressed by the X chromosome. X up-regulation is required to compensate for autosomal biallelic expression. The MSL complex also participates in gene dosage compensation by promoting expression of Tsix non-coding RNA. MSL2 plays a key role in gene dosage by ensuring biallelic expression of a subset of dosage-sensitive genes, including many haploinsufficient genes. Acts by promoting promoter-enhancer contacts, thereby preventing DNA methylation of one allele and creating a methylation-free environment for methylation-sensitive transcription factors such as SP1, KANSL1 and KANSL3. Also acts as an E3 ubiquitin ligase that promotes monoubiquitination of histone H2B at 'Lys-35' (H2BK34Ub), but not that of H2A. This activity is greatly enhanced by heterodimerization with MSL1. H2B ubiquitination in turn stimulates histone H3 methylation at 'Lys-4' (H3K4me) and 'Lys-79' (H3K79me) and leads to gene activation, including that of HOXA9 and MEIS1. The polypeptide is E3 ubiquitin-protein ligase MSL2 (Mus musculus (Mouse)).